A 221-amino-acid polypeptide reads, in one-letter code: CDC5 pindle pole body anchor protein 1 (221 aa).

The segment at 142-221 (KNIERDNLKP…PTEDSVPHAE (80 aa)) is disordered. 3 positions are modified to phosphoserine: S158, S170, and S175. The short motif at 165–170 (PLVTSS) is the CDC5-binding element. The span at 166-188 (LVTSSPIHMSPLQSRQRPVSSLQ) shows a compositional bias: polar residues. Positions 189 to 195 (PPKGPNF) match the CLB3-docking motif. The CDC14-binding motif lies at 200–202 (PKL).

In terms of assembly, interacts with CDC5 and CDC14. In terms of processing, phosphorylated by CLB3-CDK1 in metaphase which is required for correct localization at the nuclear envelop and the spindle pole body, and dephosphorylated by CDC14 in early anaphase.

The protein localises to the nucleus membrane. It is found in the cytoplasm. The protein resides in the cytoskeleton. Its subcellular location is the microtubule organizing center. It localises to the spindle pole body. Its function is as follows. Specialized component of the nuclear membrane that may be involved in the connection of the spindle pole body (SPB) to the nuclear envelope. Recruits CDC5 to spindle pole bodies in metaphase. The polypeptide is CDC5 pindle pole body anchor protein 1 (Saccharomyces cerevisiae (strain ATCC 204508 / S288c) (Baker's yeast)).